A 422-amino-acid chain; its full sequence is 4-hydroxy-3-methylbut-2-en-1-yl diphosphate synthase (flavodoxin) (422 aa).

4 residues coordinate [4Fe-4S] cluster: C316, C319, C362, and E369.

It belongs to the IspG family. [4Fe-4S] cluster serves as cofactor.

The catalysed reaction is (2E)-4-hydroxy-3-methylbut-2-enyl diphosphate + oxidized [flavodoxin] + H2O + 2 H(+) = 2-C-methyl-D-erythritol 2,4-cyclic diphosphate + reduced [flavodoxin]. It participates in isoprenoid biosynthesis; isopentenyl diphosphate biosynthesis via DXP pathway; isopentenyl diphosphate from 1-deoxy-D-xylulose 5-phosphate: step 5/6. Its function is as follows. Converts 2C-methyl-D-erythritol 2,4-cyclodiphosphate (ME-2,4cPP) into 1-hydroxy-2-methyl-2-(E)-butenyl 4-diphosphate. This chain is 4-hydroxy-3-methylbut-2-en-1-yl diphosphate synthase (flavodoxin), found in Ehrlichia canis (strain Jake).